A 550-amino-acid chain; its full sequence is Mitochondrial distribution and morphology protein 34 (550 aa).

Residues 1–208 (MAFNFNWSPL…CPEQMSKEDH (208 aa)) form the SMP-LTD domain. 3 disordered regions span residues 294–313 (VDKPEASSTTPLTTPSLVKS), 358–505 (RNAK…ILEQ), and 519–550 (VYDEKQRNPSFWDEREDSPPPAYEAQPTTAAS). The segment covering 300–310 (SSTTPLTTPSL) has biased composition (low complexity). Over residues 364 to 376 (ANRKKKTRVVNLR) the composition is skewed to basic residues. 2 stretches are compositionally biased toward polar residues: residues 391 to 407 (MSDSASVQASESITMSD) and 458 to 467 (AEISQPQVAR). Residues 481 to 495 (SENDKRSDSKRRGPR) show a composition bias toward basic and acidic residues.

Belongs to the MDM34 family. As to quaternary structure, component of the ER-mitochondria encounter structure (ERMES) or MDM complex, composed of MMM1, MDM10, MDM12 and MDM34.

The protein resides in the mitochondrion outer membrane. Functionally, component of the ERMES/MDM complex, which serves as a molecular tether to connect the endoplasmic reticulum (ER) and mitochondria. Components of this complex are involved in the control of mitochondrial shape and protein biogenesis, and function in nonvesicular lipid trafficking between the ER and mitochondria. MDM34 is required for the interaction of the ER-resident membrane protein MMM1 and the outer mitochondrial membrane-resident beta-barrel protein MDM10. The polypeptide is Mitochondrial distribution and morphology protein 34 (Pyricularia oryzae (strain 70-15 / ATCC MYA-4617 / FGSC 8958) (Rice blast fungus)).